The following is a 185-amino-acid chain: Probable calcium-binding protein CML10 (185 aa).

The interval 1–41 (MVKIKMPALFRRRSGSKSPPLPQADPASGGGSPAPTPEEEM) is disordered. 4 consecutive EF-hand domains span residues 36–71 (TPEEEMERVFRKFDANGDGRISRSELGALFESLGHA), 72–107 (ATDDELARMMAEADADGDGFISLDEFAALNATASGD), 110–145 (AVEEDLRHAFRVFDADGNGTISAAELARVLHGLGEK), and 146–181 (ATVQQCRRMIEGVDQNGDGLISFEEFKVMMAGGGSF). Residues Asp49, Asn51, Asp53, Arg55, Glu60, Asp85, Asp87, Asp89, Glu96, Asp123, Asp125, Asn127, Thr129, Glu134, Asp159, Asn161, Asp163, and Glu170 each contribute to the Ca(2+) site.

Its function is as follows. Potential calcium sensor. This chain is Probable calcium-binding protein CML10 (CML10), found in Oryza sativa subsp. japonica (Rice).